Here is a 130-residue protein sequence, read N- to C-terminus: Protein ApaG (130 aa).

Residues 3–127 (SEVTRSIRVT…FSLDSPHGRS (125 aa)) enclose the ApaG domain.

The polypeptide is Protein ApaG (Rhodospirillum centenum (strain ATCC 51521 / SW)).